Reading from the N-terminus, the 357-residue chain is Serine/threonine-protein kinase nekl-2 (357 aa).

The Protein kinase domain maps to 4-267 (YEKVRVVGRG…VSQLLSDPLV (264 aa)). Residues 10–18 (VGRGAFGVC) and K35 contribute to the ATP site. D137 serves as the catalytic Proton acceptor. Over residues 281–290 (IEPPPTDKRK) the composition is skewed to basic and acidic residues. A disordered region spans residues 281–357 (IEPPPTDKRK…QSRSQVHSKY (77 aa)). 2 stretches are compositionally biased toward polar residues: residues 293–327 (ASLSSRLRTYPTQSTLRPYSLSSNAPTTHLTQLTP) and 336–357 (FFSSGRTSNQRTQSRSQVHSKY).

Belongs to the protein kinase superfamily. NEK Ser/Thr protein kinase family. NIMA subfamily. Mg(2+) is required as a cofactor. In terms of tissue distribution, expressed in hypodermal cells including in hyp7 syncytium but not in seam cells.

It localises to the cytoplasm. The catalysed reaction is L-seryl-[protein] + ATP = O-phospho-L-seryl-[protein] + ADP + H(+). The enzyme catalyses L-threonyl-[protein] + ATP = O-phospho-L-threonyl-[protein] + ADP + H(+). Probable serine/threonine-protein kinase required for the completion of molting. May play a role in endocytosis in the hypodermis syncytium. The sequence is that of Serine/threonine-protein kinase nekl-2 from Caenorhabditis elegans.